We begin with the raw amino-acid sequence, 238 residues long: Ribonuclease PH (238 aa).

Phosphate is bound by residues Arg86 and 124-126 (GTR).

It belongs to the RNase PH family. In terms of assembly, homohexameric ring arranged as a trimer of dimers.

It carries out the reaction tRNA(n+1) + phosphate = tRNA(n) + a ribonucleoside 5'-diphosphate. In terms of biological role, phosphorolytic 3'-5' exoribonuclease that plays an important role in tRNA 3'-end maturation. Removes nucleotide residues following the 3'-CCA terminus of tRNAs; can also add nucleotides to the ends of RNA molecules by using nucleoside diphosphates as substrates, but this may not be physiologically important. Probably plays a role in initiation of 16S rRNA degradation (leading to ribosome degradation) during starvation. The sequence is that of Ribonuclease PH from Yersinia enterocolitica serotype O:8 / biotype 1B (strain NCTC 13174 / 8081).